The following is a 201-amino-acid chain: MANSLSVHLVKELREKTGAAIMDCKKALEVSKGDIDEAEKWLRQQGIAKAKKKSERLTPEGVIASYIHAGDKIGVLVEVNCETDFVARTPTFKELAKEVAIQIAAASPRFLSKEDIPKEVLDEERQKIIESLKGQNKEDLDKVVQEKLEKFIVDSCLLEQPFVKDQSITVRDLICQRIAQIGENIVVRRFVRFQLGEEIEN.

Residues 83-86 (TDFV) are involved in Mg(2+) ion dislocation from EF-Tu.

Belongs to the EF-Ts family.

Its subcellular location is the cytoplasm. In terms of biological role, associates with the EF-Tu.GDP complex and induces the exchange of GDP to GTP. It remains bound to the aminoacyl-tRNA.EF-Tu.GTP complex up to the GTP hydrolysis stage on the ribosome. The chain is Elongation factor Ts from Methylacidiphilum infernorum (isolate V4) (Methylokorus infernorum (strain V4)).